Here is a 439-residue protein sequence, read N- to C-terminus: tRNA(Ile)-lysidine synthase (439 aa).

An ATP-binding site is contributed by 25 to 30 (SGGLDS).

It belongs to the tRNA(Ile)-lysidine synthase family.

It is found in the cytoplasm. It carries out the reaction cytidine(34) in tRNA(Ile2) + L-lysine + ATP = lysidine(34) in tRNA(Ile2) + AMP + diphosphate + H(+). Functionally, ligates lysine onto the cytidine present at position 34 of the AUA codon-specific tRNA(Ile) that contains the anticodon CAU, in an ATP-dependent manner. Cytidine is converted to lysidine, thus changing the amino acid specificity of the tRNA from methionine to isoleucine. This Edwardsiella ictaluri (strain 93-146) protein is tRNA(Ile)-lysidine synthase.